A 130-amino-acid chain; its full sequence is Small ribosomal subunit protein uS11c (130 aa).

Belongs to the universal ribosomal protein uS11 family. Part of the 30S ribosomal subunit.

It localises to the plastid. The protein localises to the chloroplast. The protein is Small ribosomal subunit protein uS11c of Anthoceros angustus (Hornwort).